A 153-amino-acid chain; its full sequence is Large ribosomal subunit protein uL23m (153 aa).

The segment at 131-153 (MADEQQRQGSDPQRGGVPNWFSL) is disordered.

Belongs to the universal ribosomal protein uL23 family. In terms of assembly, component of the mitochondrial ribosome large subunit (39S) which comprises a 16S rRNA and about 50 distinct proteins.

It localises to the mitochondrion. The protein is Large ribosomal subunit protein uL23m (MRPL23) of Otolemur garnettii (Small-eared galago).